The sequence spans 642 residues: Bifunctional protein glk (642 aa).

The interval 1-340 (MSTGAQSKAV…QLSNRSGGAS (340 aa)) is glucokinase. 23 to 28 (ADVGGT) contacts ATP. The HTH rpiR-type domain occupies 341-417 (SAVFERIRQM…LKLATGLTGT (77 aa)). The interval 341–642 (SAVFERIRQM…SPAAKDVARD (302 aa)) is putative HTH-type transcriptional regulator. The H-T-H motif DNA-binding region spans 377–396 (IVDIARKADVSQPTVIRFCR). In terms of domain architecture, SIS spans 461 to 600 (AIEILNGARR…AVGVAIRRAS (140 aa)). The chain crosses the membrane as a helical span at residues 576–596 (SMISRILHLLMIDILAVGVAI).

It in the N-terminal section; belongs to the bacterial glucokinase family.

It is found in the membrane. It carries out the reaction D-glucose + ATP = D-glucose 6-phosphate + ADP + H(+). This Burkholderia orbicola (strain AU 1054) protein is Bifunctional protein glk (glk).